Consider the following 205-residue polypeptide: Sarcosine oxidase subunit gamma (205 aa).

It belongs to the SoxG family. Heterotetramer composed of subunits alpha (SoxA), beta (SoxB), gamma (SoxG) and delta (SoxD).

The protein localises to the cytoplasm. It carries out the reaction sarcosine + (6S)-5,6,7,8-tetrahydrofolate + O2 = (6R)-5,10-methylene-5,6,7,8-tetrahydrofolate + glycine + H2O2. It catalyses the reaction sarcosine + O2 + H2O = formaldehyde + glycine + H2O2. Inhibited by Zn(2+), Cu(2+), Cd(2+), Hg(2+), Ag(+), p-chloromercuribenzoate (p-CMB), iodoacetamide, N-ethylmaleimide, CN(-), o-phenanthroline and sodium lauryl sulfate. In terms of biological role, in the presence of tetrahydrofolate, catalyzes the oxidative demethylation of sarcosine to yield glycine, 5,10-methylenetetrahydrofolate and hydrogen peroxide. In the absence of tetrahydrofolate, catalyzes the oxidative demethylation of sarcosine to yield glycine, formaldehyde and hydrogen peroxide. Can also use N-methyl-L-alanine and N-ethyl-L-glycine. Is very specific for oxygen as an acceptor. The chain is Sarcosine oxidase subunit gamma from Corynebacterium sp. (strain U-96).